Consider the following 184-residue polypeptide: ATP synthase subunit b, chloroplastic (184 aa).

A helical transmembrane segment spans residues L27–L49.

This sequence belongs to the ATPase B chain family. F-type ATPases have 2 components, F(1) - the catalytic core - and F(0) - the membrane proton channel. F(1) has five subunits: alpha(3), beta(3), gamma(1), delta(1), epsilon(1). F(0) has four main subunits: a(1), b(1), b'(1) and c(10-14). The alpha and beta chains form an alternating ring which encloses part of the gamma chain. F(1) is attached to F(0) by a central stalk formed by the gamma and epsilon chains, while a peripheral stalk is formed by the delta, b and b' chains.

The protein localises to the plastid. The protein resides in the chloroplast thylakoid membrane. Its function is as follows. F(1)F(0) ATP synthase produces ATP from ADP in the presence of a proton or sodium gradient. F-type ATPases consist of two structural domains, F(1) containing the extramembraneous catalytic core and F(0) containing the membrane proton channel, linked together by a central stalk and a peripheral stalk. During catalysis, ATP synthesis in the catalytic domain of F(1) is coupled via a rotary mechanism of the central stalk subunits to proton translocation. Component of the F(0) channel, it forms part of the peripheral stalk, linking F(1) to F(0). The sequence is that of ATP synthase subunit b, chloroplastic from Draba nemorosa (Woodland whitlowgrass).